The following is a 176-amino-acid chain: uncharacterized protein (176 aa).

The span at 15–28 shows a compositional bias: polar residues; sequence TSSNPPASASQSTG. Disordered stretches follow at residues 15–100 and 125–176; these read TSSN…TSAG and ASLR…NLGA. Basic and acidic residues predominate over residues 43 to 52; it reads FIDKVTDKPS.

This is an uncharacterized protein from Homo sapiens (Human).